A 34-amino-acid polypeptide reads, in one-letter code: Protamine-Z1/Z2 (34 aa).

A disordered region spans residues 1–34 (PRRRRRSSRPVRRRRRYRRSTAARRRRRVVRRRR).

In terms of tissue distribution, testis.

It localises to the nucleus. Its subcellular location is the chromosome. Protamines substitute for histones in the chromatin of sperm during the haploid phase of spermatogenesis. They compact sperm DNA into a highly condensed, stable and inactive complex. The sequence is that of Protamine-Z1/Z2 from Sarda orientalis (Striped bonito).